Reading from the N-terminus, the 466-residue chain is Argininosuccinate lyase (466 aa).

Belongs to the lyase 1 family. Argininosuccinate lyase subfamily.

It is found in the cytoplasm. It catalyses the reaction 2-(N(omega)-L-arginino)succinate = fumarate + L-arginine. It functions in the pathway amino-acid biosynthesis; L-arginine biosynthesis; L-arginine from L-ornithine and carbamoyl phosphate: step 3/3. The protein is Argininosuccinate lyase of Desulfovibrio desulfuricans (strain ATCC 27774 / DSM 6949 / MB).